The sequence spans 758 residues: 5-methyltetrahydropteroyltriglutamate--homocysteine methyltransferase (758 aa).

5-methyltetrahydropteroyltri-L-glutamate-binding positions include 16 to 19 (RELK) and Lys112. L-homocysteine is bound by residues 433–435 (IGS) and Glu486. L-methionine-binding positions include 433–435 (IGS) and Glu486. Residues 517–518 (RC) and Trp563 contribute to the 5-methyltetrahydropteroyltri-L-glutamate site. Asp601 is an L-homocysteine binding site. Residue Asp601 participates in L-methionine binding. Glu607 is a binding site for 5-methyltetrahydropteroyltri-L-glutamate. Positions 643, 645, and 667 each coordinate Zn(2+). His696 serves as the catalytic Proton donor. Cys728 is a Zn(2+) binding site.

This sequence belongs to the vitamin-B12 independent methionine synthase family. Requires Zn(2+) as cofactor.

The catalysed reaction is 5-methyltetrahydropteroyltri-L-glutamate + L-homocysteine = tetrahydropteroyltri-L-glutamate + L-methionine. It participates in amino-acid biosynthesis; L-methionine biosynthesis via de novo pathway; L-methionine from L-homocysteine (MetE route): step 1/1. Its function is as follows. Catalyzes the transfer of a methyl group from 5-methyltetrahydrofolate to homocysteine resulting in methionine formation. This chain is 5-methyltetrahydropteroyltriglutamate--homocysteine methyltransferase, found in Neisseria gonorrhoeae (strain ATCC 700825 / FA 1090).